Reading from the N-terminus, the 334-residue chain is GTPase Obg (334 aa).

An Obg domain is found at 1–159 (MRFVDEVVIK…KEVRLELNLL (159 aa)). The region spanning 160-331 (ADVALLGLPN…LAKKLNEFLQ (172 aa)) is the OBG-type G domain. Residues 166 to 173 (GLPNAGKS), 191 to 195 (FTTMY), 212 to 215 (DIPG), 282 to 285 (NKID), and 312 to 314 (SAA) contribute to the GTP site. Positions 173 and 193 each coordinate Mg(2+).

This sequence belongs to the TRAFAC class OBG-HflX-like GTPase superfamily. OBG GTPase family. In terms of assembly, monomer. Requires Mg(2+) as cofactor.

The protein localises to the cytoplasm. Its function is as follows. An essential GTPase which binds GTP, GDP and possibly (p)ppGpp with moderate affinity, with high nucleotide exchange rates and a fairly low GTP hydrolysis rate. Plays a role in control of the cell cycle, stress response, ribosome biogenesis and in those bacteria that undergo differentiation, in morphogenesis control. The chain is GTPase Obg from Francisella tularensis subsp. tularensis (strain FSC 198).